Reading from the N-terminus, the 171-residue chain is S-ribosylhomocysteine lyase (171 aa).

Fe cation is bound by residues histidine 54, histidine 58, and cysteine 128.

This sequence belongs to the LuxS family. In terms of assembly, homodimer. Fe cation serves as cofactor.

The catalysed reaction is S-(5-deoxy-D-ribos-5-yl)-L-homocysteine = (S)-4,5-dihydroxypentane-2,3-dione + L-homocysteine. Involved in the synthesis of autoinducer 2 (AI-2) which is secreted by bacteria and is used to communicate both the cell density and the metabolic potential of the environment. The regulation of gene expression in response to changes in cell density is called quorum sensing. Catalyzes the transformation of S-ribosylhomocysteine (RHC) to homocysteine (HC) and 4,5-dihydroxy-2,3-pentadione (DPD). The sequence is that of S-ribosylhomocysteine lyase from Photorhabdus laumondii subsp. laumondii (strain DSM 15139 / CIP 105565 / TT01) (Photorhabdus luminescens subsp. laumondii).